The chain runs to 582 residues: ATP-dependent lipid A-core flippase (582 aa).

The next 5 helical transmembrane spans lie at 16–36 (LWPM…ALII), 63–83 (VLLW…ASGF), 153–173 (IIGL…ILIV), 253–273 (PIIQ…ASFP), and 275–295 (VMET…IALM). Positions 28 to 310 (AVAAIALIIN…LTNVNAQFQR (283 aa)) constitute an ABC transmembrane type-1 domain. Positions 342–578 (LEFRQVNFAY…NGAYAQLHRM (237 aa)) constitute an ABC transporter domain. 376-383 (GRSGSGKS) lines the ATP pocket.

The protein belongs to the ABC transporter superfamily. Lipid exporter (TC 3.A.1.106) family. Homodimer.

It localises to the cell inner membrane. It carries out the reaction ATP + H2O + lipid A-core oligosaccharideSide 1 = ADP + phosphate + lipid A-core oligosaccharideSide 2.. In terms of biological role, involved in lipopolysaccharide (LPS) biosynthesis. Translocates lipid A-core from the inner to the outer leaflet of the inner membrane. Transmembrane domains (TMD) form a pore in the inner membrane and the ATP-binding domain (NBD) is responsible for energy generation. The protein is ATP-dependent lipid A-core flippase of Pectobacterium atrosepticum (strain SCRI 1043 / ATCC BAA-672) (Erwinia carotovora subsp. atroseptica).